The primary structure comprises 284 residues: MYVVSTKQMLNNAQRGGYAVPAFNIHNLETMQVVVETAANLHAPVIIAGTPGTFTHAGTENLLALVSAMAKQYHHPLTIHLDHHTKFDDIAQKVRSGVRSVMIDASHLPFAQNISRVKEVVDFCHRFDVSVEAELGQLGGQEDDVQVNEADALYTNPAQAREFAEATGIDSLAVAIGTAHGMYASAPVLDFSRLENIRQWVNLPLVLHGASGLSTKDIQQTIKVGICKINVATELKNAFSQALKNYLTEHPEATDPRDYLQSAKSAMRDVVSKVIADCGCEGRA.

The active-site Proton donor is the Asp-82. Zn(2+) contacts are provided by His-83 and His-180. Gly-181 is a dihydroxyacetone phosphate binding site. His-208 serves as a coordination point for Zn(2+). Dihydroxyacetone phosphate-binding positions include 209 to 211 (GAS) and 230 to 233 (NVAT).

The protein belongs to the class II fructose-bisphosphate aldolase family. TagBP aldolase GatY subfamily. In terms of assembly, forms a complex with GatZ. The cofactor is Zn(2+).

It catalyses the reaction D-tagatofuranose 1,6-bisphosphate = D-glyceraldehyde 3-phosphate + dihydroxyacetone phosphate. The protein operates within carbohydrate metabolism; D-tagatose 6-phosphate degradation; D-glyceraldehyde 3-phosphate and glycerone phosphate from D-tagatose 6-phosphate: step 2/2. In terms of biological role, catalytic subunit of the tagatose-1,6-bisphosphate aldolase GatYZ, which catalyzes the reversible aldol condensation of dihydroxyacetone phosphate (DHAP or glycerone-phosphate) with glyceraldehyde 3-phosphate (G3P) to produce tagatose 1,6-bisphosphate (TBP). Requires GatZ subunit for full activity and stability. Is involved in the catabolism of galactitol. The sequence is that of D-tagatose-1,6-bisphosphate aldolase subunit GatY from Escherichia coli O139:H28 (strain E24377A / ETEC).